A 121-amino-acid chain; its full sequence is uncharacterized protein (121 aa).

Disordered stretches follow at residues 1–41 (MRRQ…QESR) and 94–121 (GGTI…GLRR). The segment covering 98–108 (SGQQSRNSSLP) has biased composition (polar residues).

Predominantly expressed in tissues containing motile cilia. Also expressed in non-motile ciliated adult olfactory bulbs.

It is found in the cytoplasm. It localises to the cytoskeleton. The protein localises to the cilium basal body. This is an uncharacterized protein from Mus musculus (Mouse).